The following is a 108-amino-acid chain: UPF0145 protein sll118 (108 aa).

The protein belongs to the UPF0145 family.

In Synechocystis sp. (strain ATCC 27184 / PCC 6803 / Kazusa), this protein is UPF0145 protein sll118.